A 389-amino-acid polypeptide reads, in one-letter code: 8-amino-7-oxononanoate synthase (389 aa).

Arg-18 is a substrate binding site. 104 to 105 (GY) is a binding site for pyridoxal 5'-phosphate. His-129 serves as a coordination point for substrate. Pyridoxal 5'-phosphate-binding residues include Ser-176, His-204, and Thr-232. Lys-235 bears the N6-(pyridoxal phosphate)lysine mark. Residue Thr-351 participates in substrate binding.

This sequence belongs to the class-II pyridoxal-phosphate-dependent aminotransferase family. BioF subfamily. As to quaternary structure, homodimer. It depends on pyridoxal 5'-phosphate as a cofactor.

The enzyme catalyses 6-carboxyhexanoyl-[ACP] + L-alanine + H(+) = (8S)-8-amino-7-oxononanoate + holo-[ACP] + CO2. Its pathway is cofactor biosynthesis; biotin biosynthesis. Its function is as follows. Catalyzes the decarboxylative condensation of pimeloyl-[acyl-carrier protein] and L-alanine to produce 8-amino-7-oxononanoate (AON), [acyl-carrier protein], and carbon dioxide. The polypeptide is 8-amino-7-oxononanoate synthase (Citrifermentans bemidjiense (strain ATCC BAA-1014 / DSM 16622 / JCM 12645 / Bem) (Geobacter bemidjiensis)).